The chain runs to 559 residues: Prolyl 4-hydroxylase subunit alpha-1 (559 aa).

The first 16 residues, 1-16 (MRLALLVLATIGYAVA), serve as a signal peptide directing secretion. Residue N158 is glycosylated (N-linked (GlcNAc...) asparagine). Residues 404–512 (TAEELQIANY…KWVSNKWIHE (109 aa)) enclose the Fe2OG dioxygenase domain. Fe cation is bound by residues H422, D424, and H493. K503 provides a ligand contact to 2-oxoglutarate.

It belongs to the P4HA family. As to quaternary structure, heterotetramer of two alpha chains and two beta chains. Exists either as a phy-1(2)/pdi-2(2) tetramer or as a phy-1/phy-2/pdi-2(2) tetramer. The cofactor is Fe(2+). It depends on L-ascorbate as a cofactor.

It is found in the endoplasmic reticulum lumen. It carries out the reaction L-prolyl-[collagen] + 2-oxoglutarate + O2 = trans-4-hydroxy-L-prolyl-[collagen] + succinate + CO2. Catalyzes the post-translational formation of 4-hydroxyproline in -Xaa-Pro-Gly- sequences in collagens and other proteins. The protein is Prolyl 4-hydroxylase subunit alpha-1 (dpy-18) of Caenorhabditis elegans.